A 436-amino-acid chain; its full sequence is MSLPVVAVVGRPNVGKSHLFNRVIGEATAIVSDEAGTTRDRHFGEAEWAGRQFWLVDTGGLVEDSHLLMDTAIRRQVMQAIEEADLMLFVVDAKVGVHPSDARIVDILRNSQKPWMLVANKVDDPASTDFYEFFRLGVTDVYPVSAQNGKGSGDLLDAVVANIPEVEEEERDAVRVAVIGRPNVGKSSFVNRLLGEDRLVVSDESGTTRDAIDAPMRYHDTDLVFVDTAGLRRQSRIDDGVEFYSALRTRRAIDSSDVCILMIDATEGLQNQDLKIATMAWEAGRGLILVINKWDLYEDKTDKSADKFKKEAVEKVPYLKFVPFLFTSAISGQRVTKVLDIVLSVQEQRTRRISTSEVNDALGDLLARLQPPQAAGREVKLNYATQVEIEPPTIAVFGNNPEAIPEHYVRFLHNGFRERWGFTGAPLRIILRRKNS.

EngA-type G domains are found at residues 4 to 167 (PVVA…PEVE) and 174 to 350 (VRVA…EQRT). GTP-binding positions include 10-17 (GRPNVGKS), 57-61 (DTGGL), 120-123 (NKVD), 180-187 (GRPNVGKS), 227-231 (DTAGL), and 292-295 (NKWD). The 85-residue stretch at 351–435 (RRISTSEVND…PLRIILRRKN (85 aa)) folds into the KH-like domain.

Belongs to the TRAFAC class TrmE-Era-EngA-EngB-Septin-like GTPase superfamily. EngA (Der) GTPase family. As to quaternary structure, associates with the 50S ribosomal subunit.

GTPase that plays an essential role in the late steps of ribosome biogenesis. This Gemmatimonas aurantiaca (strain DSM 14586 / JCM 11422 / NBRC 100505 / T-27) protein is GTPase Der.